The following is a 25-amino-acid chain: Neuromedin-U-25 (25 aa).

The residue at position 25 (asparagine 25) is an Asparagine amide.

The protein belongs to the NmU family.

It is found in the secreted. Functionally, stimulates uterine smooth muscle contraction and causes selective vasoconstriction. This Rana temporaria (European common frog) protein is Neuromedin-U-25.